The chain runs to 723 residues: Calpastatin (723 aa).

2 disordered regions span residues 1 to 402 (MNPT…PGRC) and 422 to 509 (STHS…LPPL). A compositionally biased stretch (basic residues) spans 21-30 (PNKKRHKKQA). Residue Lys32 forms a Glycyl lysine isopeptide (Lys-Gly) (interchain with G-Cter in SUMO2) linkage. Basic and acidic residues predominate over residues 46–84 (VVHEKKTQEVKPKEHTEPKSQPKHPSDTRSKHAPKEKAV). Lys50 carries the N6-acetyllysine modification. Low complexity-rich tracts occupy residues 85–94 (SKSSEQPPSE) and 113–125 (SAVP…ASAE). Phosphoserine is present on Ser87. Thr137 carries the post-translational modification Phosphothreonine. Positions 157-173 (TALDDLIDTLGEPEETK) are enriched in acidic residues. The Inhibitory domain 1 repeat unit spans residues 171 to 224 (ETKEDTTTYTGPEVSDPMSSTYIEELGKREVTLPPKYRELLNKEEGIAGPPPDS). Basic and acidic residues predominate over residues 195-216 (ELGKREVTLPPKYRELLNKEEG). Ser224 and Ser245 each carry phosphoserine. Basic and acidic residues-rich tracts occupy residues 249–263 (DAKK…EEAL) and 306–367 (PRPE…KPLS). The stretch at 307–359 (RPELDPSSIKEVDEAKAKEEKVKKCGEDEERVPSEYRLKPATDKDGKPLLPEA) is one Inhibitory domain 2 repeat. A phosphoserine mark is found at Ser367, Ser369, and Ser376. Residues 378–396 (DFDRSKCKEKQSKPTEKNR) show a composition bias toward basic and acidic residues. Ser443 bears the Phosphoserine mark. Residues 445–504 (GKKEADPEDGKPVEDKVKEKAKEEDREKLGEREETIPPDYRLEEAKDKDGKPLPPKEVKE) are compositionally biased toward basic and acidic residues. Residues 449–502 (ADPEDGKPVEDKVKEKAKEEDREKLGEREETIPPDYRLEEAKDKDGKPLPPKEV) form an Inhibitory domain 3 repeat. Residues Ser519 and Ser530 each carry the phosphoserine modification. The segment at 547–723 (SQTPAPTTQA…KPKADGKSTS (177 aa)) is disordered. Over residues 548–560 (QTPAPTTQAAGPP) the composition is skewed to low complexity. Over residues 562–571 (DSARDNKELD) the composition is skewed to basic and acidic residues. 2 positions are modified to phosphoserine: Ser578 and Ser580. An Inhibitory domain 4 repeat occupies 586 to 642 (PDPDEHKPVEDKVKEKAKAEHRDKLGERDDTIPPKYQHLLDDNKEGTPGKPKRSESP). The segment covering 586-643 (PDPDEHKPVEDKVKEKAKAEHRDKLGERDDTIPPKYQHLLDDNKEGTPGKPKRSESPR) has biased composition (basic and acidic residues). Residues 653–670 (NLQVPRTPLTPSQGTWTA) show a composition bias toward polar residues. The segment covering 672–690 (PQLQKPQQTQQRTKTRSLL) has biased composition (low complexity). Positions 701–723 (KAKDSTKAKEETSKPKADGKSTS) are enriched in basic and acidic residues.

Belongs to the protease inhibitor I27 (calpastatin) family.

Functionally, specific inhibition of calpain (calcium-dependent cysteine protease). Plays a key role in postmortem tenderization of meat and have been proposed to be involved in muscle protein degradation in living tissue. The polypeptide is Calpastatin (CAST) (Ovis aries (Sheep)).